A 435-amino-acid chain; its full sequence is MSKKKVNLGVRDVPTPFSWVSFSLQHLFAMFGSTILVPKLVGMSPAVALVTSGIGTLAYLLITKGQIPAYLGSSFAFISPIILVKATGGPGAAMVGAFLAGLVYGLIALLIRQLGTGWLMKILPPVVVGPVIIVIGLGLASTAVNMAMYADPNASELVYSLKHFSVAGVTLAITIICAIFLRGFLSLIPVLIGIIGGYLFALTQGIVNFQPVLDAKWFAVPEFIIPFKDYSPSVTLGIAAAMVPVAFVTMSEHIGHQMVLSKVVGQDFIKKPGLHRSIMGDSVATILASLIGGPPTTTYGENIGVLAITRVFSVFVIGGAAVIALCFGFIGKISALISSVPSAVMGGVSFLLFGIIASSGLRMLIDNKIDYENNRNLIITSVILVIGVGGAFIQVSQGGFQVSGMALAAIVGVILNLILPQAKEEQADTSEQHHI.

Transmembrane regions (helical) follow at residues 17–37 (FSWV…TILV), 42–62 (GMSP…YLLI), 67–87 (IPAY…VKAT), 91–111 (GAAM…ALLI), 122–142 (ILPP…LAST), 161–181 (LKHF…AIFL), 191–213 (LIGI…QPVL), 234–254 (VTLG…SEHI), 311–331 (VFSV…GFIG), 336–356 (LISS…FGII), 376–396 (NLII…IQVS), and 399–419 (GFQV…NLIL).

It belongs to the nucleobase:cation symporter-2 (NCS2) (TC 2.A.40) family.

It is found in the cell membrane. In terms of biological role, transport of uracil in the cell. The sequence is that of Uracil permease (pyrP) from Bacillus subtilis (strain 168).